A 448-amino-acid polypeptide reads, in one-letter code: MFSSSVELELFFIFVLVVLNGIFSGSEIAIVSARKVRLEQLAKRGNRKAKLALKLATAPNNFLSAVQIGITLIGILTGAVGGATVALRLAEFLDDIPLLAPYAGPLSISLLVGFITYLSLVVGELVPKRIALSHPEHIACGVAPAMHLVAQLTAPLVYLLGVSTDAVLRLFGITSKEASPITEEEIRVMIEQGAQAGMIDEAEQEMVERVFRLGDRPVKTLMTPRTAIAWLDVESDWEENQQEILDTPYSRFPVGRDSLDECLGFVRVKDILNSQWSGQKINLEEIVQPPLFVAENTRSLHVLEMFRASGTHLALITDEYGGIEGLVTLNDLIEAIVGSIPNDDEIQEPQIIQREDGSYLLDGLLPIDEFKEIFDIETLSNEEEGHYHTLGGFVIESLGKIPQSGDYFVSDTLRVEVVDMDGIRIDKVLVNQLPEDSSTTEEESETDN.

The region spanning 2–203 is the CNNM transmembrane domain; sequence FSSSVELELF…AQAGMIDEAE (202 aa). 4 helical membrane-spanning segments follow: residues 11–31, 62–82, 106–126, and 142–162; these read FFIFVLVVLNGIFSGSEIAIV, FLSAVQIGITLIGILTGAVGG, LSISLLVGFITYLSLVVGELV, and VAPAMHLVAQLTAPLVYLLGV. CBS domains are found at residues 222 to 281 and 286 to 345; these read MTPR…GQKI and IVQP…NDDE.

The protein belongs to the UPF0053 family.

The protein localises to the cell membrane. The sequence is that of UPF0053 protein sll0260 from Synechocystis sp. (strain ATCC 27184 / PCC 6803 / Kazusa).